Reading from the N-terminus, the 251-residue chain is Triosephosphate isomerase (251 aa).

9–11 is a substrate binding site; the sequence is NWK. The Electrophile role is filled by His-94. Glu-166 (proton acceptor) is an active-site residue. Substrate is bound by residues Gly-172, Ser-211, and 232-233; that span reads GG.

It belongs to the triosephosphate isomerase family. In terms of assembly, homodimer.

Its subcellular location is the cytoplasm. The enzyme catalyses D-glyceraldehyde 3-phosphate = dihydroxyacetone phosphate. It functions in the pathway carbohydrate biosynthesis; gluconeogenesis. Its pathway is carbohydrate degradation; glycolysis; D-glyceraldehyde 3-phosphate from glycerone phosphate: step 1/1. Its function is as follows. Involved in the gluconeogenesis. Catalyzes stereospecifically the conversion of dihydroxyacetone phosphate (DHAP) to D-glyceraldehyde-3-phosphate (G3P). This Xanthomonas euvesicatoria pv. vesicatoria (strain 85-10) (Xanthomonas campestris pv. vesicatoria) protein is Triosephosphate isomerase.